The sequence spans 184 residues: Adenylate kinase 1 (184 aa).

Residue 11–16 participates in ATP binding; the sequence is GAGKGT. Residues 31–60 are NMP; that stretch reads STGDILRQAMKEQTPLGIKAQSYVDSGELV. AMP contacts are provided by residues Thr-32, Arg-37, 58–60, 86–89, and Gln-93; these read ELV and GFPR. The LID stretch occupies residues 127-133; the sequence is SRGRKDD. Position 128 (Arg-128) interacts with ATP. Positions 130 and 141 each coordinate AMP. Gln-169 serves as a coordination point for ATP.

The protein belongs to the adenylate kinase family. Monomer.

It is found in the cytoplasm. The enzyme catalyses AMP + ATP = 2 ADP. It participates in purine metabolism; AMP biosynthesis via salvage pathway; AMP from ADP: step 1/1. Catalyzes the reversible transfer of the terminal phosphate group between ATP and AMP. Plays an important role in cellular energy homeostasis and in adenine nucleotide metabolism. The chain is Adenylate kinase 1 from Nostoc sp. (strain PCC 7120 / SAG 25.82 / UTEX 2576).